We begin with the raw amino-acid sequence, 160 residues long: NADH-quinone oxidoreductase subunit B (160 aa).

Residues cysteine 37, cysteine 38, cysteine 102, and cysteine 132 each coordinate [4Fe-4S] cluster.

This sequence belongs to the complex I 20 kDa subunit family. In terms of assembly, NDH-1 is composed of 14 different subunits. Subunits NuoB, C, D, E, F, and G constitute the peripheral sector of the complex. It depends on [4Fe-4S] cluster as a cofactor.

Its subcellular location is the cell inner membrane. The enzyme catalyses a quinone + NADH + 5 H(+)(in) = a quinol + NAD(+) + 4 H(+)(out). NDH-1 shuttles electrons from NADH, via FMN and iron-sulfur (Fe-S) centers, to quinones in the respiratory chain. Couples the redox reaction to proton translocation (for every two electrons transferred, four hydrogen ions are translocated across the cytoplasmic membrane), and thus conserves the redox energy in a proton gradient. This chain is NADH-quinone oxidoreductase subunit B, found in Cupriavidus metallidurans (strain ATCC 43123 / DSM 2839 / NBRC 102507 / CH34) (Ralstonia metallidurans).